The following is a 105-amino-acid chain: Guanidinium exporter (105 aa).

A helical membrane pass occupies residues 1–21 (MSWIILVIAGLLEVVWAVGLK). Residues 22-28 (YTHGFSR) are Cytoplasmic-facing. The helical transmembrane segment at 29–49 (LTPSVITVTAMIVSLALLAWA) threads the bilayer. Residues 50–57 (MKSLPVGT) are Periplasmic-facing. The helical transmembrane segment at 58 to 78 (AYAVWTGIGAVGAAITGIVLL) threads the bilayer. Residues 79-81 (GES) lie on the Cytoplasmic side of the membrane. Residues 82-102 (ANPMRLASLALIVLGIIGLKL) traverse the membrane as a helical segment. Residues 103 to 105 (STH) lie on the Periplasmic side of the membrane.

This sequence belongs to the drug/metabolite transporter (DMT) superfamily. Small multidrug resistance (SMR) (TC 2.A.7.1) family. Gdx/SugE subfamily.

The protein localises to the cell inner membrane. Guanidinium ion exporter. Couples guanidinium export to the proton motive force, exchanging one guanidinium ion for two protons. The protein is Guanidinium exporter of Escherichia coli O6:H1 (strain CFT073 / ATCC 700928 / UPEC).